We begin with the raw amino-acid sequence, 463 residues long: L-seryl-tRNA(Sec) selenium transferase (463 aa).

Position 295 is an N6-(pyridoxal phosphate)lysine (K295).

It belongs to the SelA family. In terms of assembly, homodecamer; pentamer of dimers. Binds only one seryl-tRNA(Sec) per dimer. Pyridoxal 5'-phosphate serves as cofactor.

The protein localises to the cytoplasm. The enzyme catalyses L-seryl-tRNA(Sec) + selenophosphate + H(+) = L-selenocysteinyl-tRNA(Sec) + phosphate. Its pathway is aminoacyl-tRNA biosynthesis; selenocysteinyl-tRNA(Sec) biosynthesis; selenocysteinyl-tRNA(Sec) from L-seryl-tRNA(Sec) (bacterial route): step 1/1. In terms of biological role, converts seryl-tRNA(Sec) to selenocysteinyl-tRNA(Sec) required for selenoprotein biosynthesis. The polypeptide is L-seryl-tRNA(Sec) selenium transferase (Shigella dysenteriae serotype 1 (strain Sd197)).